The sequence spans 453 residues: Enolase (453 aa).

(2R)-2-phosphoglycerate is bound at residue Q163. E205 acts as the Proton donor in catalysis. Mg(2+) contacts are provided by D258, E308, and D335. K360, R389, S390, and K411 together coordinate (2R)-2-phosphoglycerate. K360 (proton acceptor) is an active-site residue.

This sequence belongs to the enolase family. Mg(2+) is required as a cofactor.

It is found in the cytoplasm. It localises to the secreted. Its subcellular location is the cell surface. The catalysed reaction is (2R)-2-phosphoglycerate = phosphoenolpyruvate + H2O. The protein operates within carbohydrate degradation; glycolysis; pyruvate from D-glyceraldehyde 3-phosphate: step 4/5. Catalyzes the reversible conversion of 2-phosphoglycerate (2-PG) into phosphoenolpyruvate (PEP). It is essential for the degradation of carbohydrates via glycolysis. This is Enolase from Mesoplasma florum (strain ATCC 33453 / NBRC 100688 / NCTC 11704 / L1) (Acholeplasma florum).